The sequence spans 426 residues: Endothelin-1 receptor (426 aa).

The signal sequence occupies residues 1-20; it reads MGVLCFLASFWLALVGGAIA. Residues 21–80 are Extracellular-facing; that stretch reads DNAERYSANLSSHVEDFTPFPGTEFNFLGTTLQPPNLALPSNGSMHGYCPQQTKITTAFK. Residues Asn-29 and Asn-62 are each glycosylated (N-linked (GlcNAc...) asparagine). The helical transmembrane segment at 81–102 threads the bilayer; sequence YINTVISCTIFIVGMVGNATLL. Over 103–112 the chain is Cytoplasmic; the sequence is RIIYQNKCMR. A helical membrane pass occupies residues 113–132; sequence NGPNALIASLALGDLIYVVI. Residues 133 to 159 are Extracellular-facing; that stretch reads DLPINVFKLLAGRWPFDHNDFGVFLCK. A disulfide bridge links Cys-158 with Cys-239. Residues 160–181 traverse the membrane as a helical segment; it reads LFPFLQKSSVGITVLNLCALSV. Over 182–205 the chain is Cytoplasmic; it reads DRYRAVASWSRVQGIGIPLITAIE. A helical membrane pass occupies residues 206-229; sequence IVSIWILSFILAIPEAIGFVMVPF. The Extracellular segment spans residues 230–256; the sequence is EYKGEQHRTCMLNATTKFMEFYQDVKD. Residues 257 to 278 form a helical membrane-spanning segment; it reads WWLFGFYFCMPLVCTAIFYTLM. Over 279-306 the chain is Cytoplasmic; the sequence is TCEMLNRRNGSLRIALSEHLKQRREVAK. A helical membrane pass occupies residues 307 to 328; that stretch reads TVFCLVVIFALCWFPLHLSRIL. Topologically, residues 329–347 are extracellular; that stretch reads KKTVYDEMDKNRCELLSFL. Residues 348 to 372 form a helical membrane-spanning segment; the sequence is LLMDYIGINLATMNSCINPIALYFV. The Cytoplasmic portion of the chain corresponds to 373-426; the sequence is SKKFKNCFQSCLCCCCHQSKSLMTSVPMNGTSIQWKNQEQNHNTERSSHKDSMN. Ser-424 bears the Phosphoserine mark.

The protein belongs to the G-protein coupled receptor 1 family. Endothelin receptor subfamily. EDNRA sub-subfamily. In terms of assembly, interacts with HDAC7 and KAT5. Predominantly expressed in vascular smooth muscle cells of a variety of issues, bronchial smooth muscle cells, myocardium, and the pituitary gland.

Its subcellular location is the cell membrane. Receptor for endothelin-1. Mediates its action by association with G proteins that activate a phosphatidylinositol-calcium second messenger system. The rank order of binding affinities for ET-A is: ET1 &gt; ET2 &gt;&gt; ET3. The chain is Endothelin-1 receptor from Rattus norvegicus (Rat).